The primary structure comprises 316 residues: MSKLSHQQQRRIHNHRQNKLAAGDRADAALVVAHLGYQLIVDDHGEILAADWRQKLGAIAVNDRVLITRDQPQHAIVEGIYPREKTLYKQHAGKLKPVASNIDQLLITFAPVPDWQNALLDRFLVAAHQAHIEPAFFCNKSDLFDAQTFAAAENRLAIYHQLGYRVFYGSIYQKTGLEELTHWLSGRQTVICGQSGVGKSSFIHYLMPDIDVWTQAVSAARGFGQHTTRNARRYPLDAHTAIIDTPGVRGFSLTHLQHSEVVSGFPEIHQYTHECRFNDCSHQHEPDCGVQRALERGDISLERFNSMMQICAEREV.

The segment at 1-20 is disordered; sequence MSKLSHQQQRRIHNHRQNKL. The segment covering 8–18 has biased composition (basic residues); that stretch reads QQRRIHNHRQN. A CP-type G domain is found at 92–251; the sequence is AGKLKPVASN…IIDTPGVRGF (160 aa). GTP is bound by residues 139–142 and 193–201; these read NKSD and GQSGVGKSS. C275, C280, H282, and C288 together coordinate Zn(2+).

This sequence belongs to the TRAFAC class YlqF/YawG GTPase family. RsgA subfamily. As to quaternary structure, monomer. Associates with 30S ribosomal subunit, binds 16S rRNA. Requires Zn(2+) as cofactor.

It localises to the cytoplasm. Functionally, one of several proteins that assist in the late maturation steps of the functional core of the 30S ribosomal subunit. Helps release RbfA from mature subunits. May play a role in the assembly of ribosomal proteins into the subunit. Circularly permuted GTPase that catalyzes slow GTP hydrolysis, GTPase activity is stimulated by the 30S ribosomal subunit. The protein is Small ribosomal subunit biogenesis GTPase RsgA of Dichelobacter nodosus (strain VCS1703A).